Consider the following 777-residue polypeptide: Acyl-homoserine lactone acylase PvdQ (777 aa).

The first 25 residues, 1–25 (MIISRQLPSFCLAALFLSFSGGAHA), serve as a signal peptide directing secretion. Positions 196-218 (AGLPAEHWQLAAARQQRFALDRG) are cleaved as a propeptide — spacer peptide. S219 (nucleophile) is an active-site residue.

This sequence belongs to the peptidase S45 family. In terms of assembly, heterodimer of an alpha subunit and a beta subunit processed from the same precursor.

Its subcellular location is the periplasm. It carries out the reaction an N-acyl-L-homoserine lactone + H2O = L-homoserine lactone + a carboxylate. In terms of biological role, catalyzes the deacylation of acyl-homoserine lactone (AHL or acyl-HSL), releasing homoserine lactone (HSL) and the corresponding fatty acid. Possesses a specificity for the degradation of long-chain acyl-HSLs (side chains of 11 to 14 carbons in length). The sequence is that of Acyl-homoserine lactone acylase PvdQ (pvdQ) from Pseudomonas fluorescens (strain ATCC BAA-477 / NRRL B-23932 / Pf-5).